Consider the following 542-residue polypeptide: Adenosylmethionine-8-amino-7-oxononanoate aminotransferase (542 aa).

170–171 (GS) is a binding site for pyridoxal 5'-phosphate. Y205 is a substrate binding site. A pyridoxal 5'-phosphate-binding site is contributed by D311. Residues K340, G375, and R470 each contribute to the substrate site. Position 340 is an N6-(pyridoxal phosphate)lysine (K340). Residues 509–542 (DGGLWTKRPDGPDNPDKANTPDTPDGARTGETVV) are disordered. Residues 515 to 524 (KRPDGPDNPD) are compositionally biased toward basic and acidic residues.

The protein belongs to the class-III pyridoxal-phosphate-dependent aminotransferase family. BioA subfamily. Homodimer. It depends on pyridoxal 5'-phosphate as a cofactor.

Its subcellular location is the cytoplasm. It catalyses the reaction (8S)-8-amino-7-oxononanoate + S-adenosyl-L-methionine = S-adenosyl-4-methylsulfanyl-2-oxobutanoate + (7R,8S)-7,8-diammoniononanoate. The protein operates within cofactor biosynthesis; biotin biosynthesis; 7,8-diaminononanoate from 8-amino-7-oxononanoate (SAM route): step 1/1. In terms of biological role, catalyzes the transfer of the alpha-amino group from S-adenosyl-L-methionine (SAM) to 7-keto-8-aminopelargonic acid (KAPA) to form 7,8-diaminopelargonic acid (DAPA). It is the only aminotransferase known to utilize SAM as an amino donor. The protein is Adenosylmethionine-8-amino-7-oxononanoate aminotransferase of Nitratidesulfovibrio vulgaris (strain ATCC 29579 / DSM 644 / CCUG 34227 / NCIMB 8303 / VKM B-1760 / Hildenborough) (Desulfovibrio vulgaris).